The sequence spans 253 residues: Large ribosomal subunit protein uL1m (253 aa).

A mitochondrion-targeting transit peptide spans 1-81 (MSSLIALGKR…SIALKSNRRA (81 aa)).

Belongs to the universal ribosomal protein uL1 family. In terms of assembly, component of the mitochondrial large ribosomal subunit (mt-LSU). Mature yeast 74S mitochondrial ribosomes consist of a small (37S) and a large (54S) subunit. The 37S small subunit contains a 15S ribosomal RNA (15S mt-rRNA) and at least 32 different proteins. The 54S large subunit contains a 21S rRNA (21S mt-rRNA) and at least 45 different proteins.

The protein resides in the mitochondrion. In terms of biological role, component of the mitochondrial ribosome (mitoribosome), a dedicated translation machinery responsible for the synthesis of mitochondrial genome-encoded proteins, including at least some of the essential transmembrane subunits of the mitochondrial respiratory chain. The mitoribosomes are attached to the mitochondrial inner membrane and translation products are cotranslationally integrated into the membrane. This chain is Large ribosomal subunit protein uL1m (mrpl1), found in Schizosaccharomyces pombe (strain 972 / ATCC 24843) (Fission yeast).